We begin with the raw amino-acid sequence, 874 residues long: Cap-specific mRNA (nucleoside-2'-O-)-methyltransferase 1A (874 aa).

Positions 1 to 10 (MSERGDDDRT) are enriched in basic and acidic residues. The interval 1-64 (MSERGDDDRT…APPTKQKTKA (64 aa)) is disordered. Positions 60-106 (QKTKAEEMMERMGYKAGEGLGKNKQGIQEPVALSTQRGKTGLGHEGA) constitute a G-patch domain. In terms of domain architecture, RrmJ-type SAM-dependent 2'-O-MTase spans 211–440 (FFQNRAAMKT…ERYITCKGLR (230 aa)). Positions 273 and 354 each coordinate S-adenosyl-L-methionine. Lys394 serves as the catalytic Proton acceptor. A disordered region spans residues 535 to 555 (PNKQRPRGGDRGSRNGNQERL).

It catalyses the reaction a 5'-end (N(7)-methyl 5'-triphosphoguanosine)-ribonucleoside in mRNA + S-adenosyl-L-methionine = a 5'-end (N(7)-methyl 5'-triphosphoguanosine)-(2'-O-methyl-ribonucleoside) in mRNA + S-adenosyl-L-homocysteine + H(+). In terms of biological role, S-adenosyl-L-methionine-dependent methyltransferase that mediates mRNA cap1 2'-O-ribose methylation to the 5'-cap structure of mRNAs. Methylates the ribose of the first nucleotide of a m(7)GpppG-capped mRNA to produce m(7)GpppNmp (cap1). Cap1 modification is linked to higher levels of translation. The chain is Cap-specific mRNA (nucleoside-2'-O-)-methyltransferase 1A from Caenorhabditis briggsae.